The primary structure comprises 242 residues: Probable 2-phosphosulfolactate phosphatase (242 aa).

It belongs to the ComB family. Requires Mg(2+) as cofactor.

The enzyme catalyses (2R)-O-phospho-3-sulfolactate + H2O = (2R)-3-sulfolactate + phosphate. The polypeptide is Probable 2-phosphosulfolactate phosphatase (Picosynechococcus sp. (strain ATCC 27264 / PCC 7002 / PR-6) (Agmenellum quadruplicatum)).